The chain runs to 386 residues: Acetate kinase (386 aa).

Asn7 serves as a coordination point for Mg(2+). Lys14 contributes to the ATP binding site. Position 78 (Arg78) interacts with substrate. Asp135 (proton donor/acceptor) is an active-site residue. Residues 195 to 199, 268 to 270, and 316 to 320 each bind ATP; these read HLGNG, DMR, and GIGEN. Glu370 lines the Mg(2+) pocket.

This sequence belongs to the acetokinase family. In terms of assembly, homodimer. It depends on Mg(2+) as a cofactor. Mn(2+) serves as cofactor.

Its subcellular location is the cytoplasm. It catalyses the reaction acetate + ATP = acetyl phosphate + ADP. It participates in metabolic intermediate biosynthesis; acetyl-CoA biosynthesis; acetyl-CoA from acetate: step 1/2. In terms of biological role, catalyzes the formation of acetyl phosphate from acetate and ATP. Can also catalyze the reverse reaction. The protein is Acetate kinase of Pseudarthrobacter chlorophenolicus (strain ATCC 700700 / DSM 12829 / CIP 107037 / JCM 12360 / KCTC 9906 / NCIMB 13794 / A6) (Arthrobacter chlorophenolicus).